A 533-amino-acid polypeptide reads, in one-letter code: Tyrosine/DOPA decarboxylase 3 (533 aa).

At Lys319 the chain carries N6-(pyridoxal phosphate)lysine.

Belongs to the group II decarboxylase family. As to quaternary structure, homodimer. The cofactor is pyridoxal 5'-phosphate. As to expression, roots.

The catalysed reaction is L-tyrosine + H(+) = tyramine + CO2. It catalyses the reaction L-dopa + H(+) = dopamine + CO2. The enzyme catalyses 5-hydroxy-L-tryptophan + H(+) = serotonin + CO2. Its function is as follows. Marginally higher substrate specificity for L-DOPA over L-tyrosine. In Papaver somniferum (Opium poppy), this protein is Tyrosine/DOPA decarboxylase 3 (TYDC3).